Reading from the N-terminus, the 451-residue chain is UPF0210 protein Cbei_2352 (451 aa).

Belongs to the UPF0210 family. As to quaternary structure, homodimer.

The chain is UPF0210 protein Cbei_2352 from Clostridium beijerinckii (strain ATCC 51743 / NCIMB 8052) (Clostridium acetobutylicum).